The primary structure comprises 114 residues: Class I hydrophobin 6 (114 aa).

A signal peptide spans 1–19 (MLFKQLILVATALTTLAVA). 4 disulfide bridges follow: Cys-33-Cys-93, Cys-40-Cys-87, Cys-41-Cys-74, and Cys-94-Cys-107. An N-linked (GlcNAc...) asparagine glycan is attached at Asn-42.

Belongs to the fungal hydrophobin family. As to quaternary structure, self-assembles to form functional amyloid fibrils called rodlets. Self-assembly into fibrillar rodlets occurs spontaneously at hydrophobic:hydrophilic interfaces and the rodlets further associate laterally to form amphipathic monolayers.

Its subcellular location is the secreted. The protein resides in the cell wall. Its function is as follows. Aerial growth, conidiation, and dispersal of filamentous fungi in the environment rely upon a capability of their secreting small amphipathic proteins called hydrophobins (HPBs) with low sequence identity. Class I can self-assemble into an outermost layer of rodlet bundles on aerial cell surfaces, conferring cellular hydrophobicity that supports fungal growth, development and dispersal; whereas Class II form highly ordered films at water-air interfaces through intermolecular interactions but contribute nothing to the rodlet structure. This chain is Class I hydrophobin 6, found in Pleurotus ostreatus (strain PC15) (Oyster mushroom).